The chain runs to 149 residues: uncharacterized protein (149 aa).

The segment covering 1-11 (MTKESKPDRLR) has biased composition (basic and acidic residues). Residues 1-20 (MTKESKPDRLRQMGALNPKP) form a disordered region.

This is an uncharacterized protein from Sinorhizobium fredii (strain NBRC 101917 / NGR234).